The primary structure comprises 510 residues: MMKKPVALIIMDGFGYNKDVKGNAIAESKTPNLDRIKKEYPNTLINASGLDVGLPDGQMGNSEVGHTNIGAGRIVYQDLTRITKSIKDGDFFTNKVLCEAMDNAKENSLHVMGLLSDGGVHSHIDHLKAIIKMAKDKGVQKVYVHAFTDGRDTDPQSALEYAKEVQASMDEIGVGEFATVSGRYYAMDRDKRWERVELAYNAMVRGIGEKANSIEEAIQNSYDDGKNDEFIMPTVIMKDDKPVGSIKENDSIIFFNFRPDRARQITRALVCEEFDGFKREDIKNFFVCLTEYDITIENVHIAFGPQSLANTLGEYLAKNGKTQLRAAETEKYAHVTFFFNGGVEEPNKGEERLLIPSPKVATYDLKPEMSAYELTDKALDKLGEDKFDFIVLNFANPDMVGHTGSIEAAIKAVETVDTCVGKLIDKIVELGGSAIITADHGNAEYMLDPETGKTVTAHSINPVPFIVVGQEYESAKLLDGGRLSDIAPTILDMMKLEKPEEMTGHSLISK.

Positions 12 and 62 each coordinate Mn(2+). Serine 62 serves as the catalytic Phosphoserine intermediate. Residues histidine 121, 151–152 (RD), arginine 183, arginine 189, 258–261 (RPDR), and lysine 331 each bind substrate. 5 residues coordinate Mn(2+): aspartate 398, histidine 402, aspartate 439, histidine 440, and histidine 458.

Belongs to the BPG-independent phosphoglycerate mutase family. As to quaternary structure, monomer. Requires Mn(2+) as cofactor.

The enzyme catalyses (2R)-2-phosphoglycerate = (2R)-3-phosphoglycerate. The protein operates within carbohydrate degradation; glycolysis; pyruvate from D-glyceraldehyde 3-phosphate: step 3/5. Its function is as follows. Catalyzes the interconversion of 2-phosphoglycerate and 3-phosphoglycerate. This Clostridioides difficile (strain 630) (Peptoclostridium difficile) protein is 2,3-bisphosphoglycerate-independent phosphoglycerate mutase.